Reading from the N-terminus, the 235-residue chain is Putative N-acetylmannosamine-6-phosphate 2-epimerase (235 aa).

Belongs to the NanE family.

The catalysed reaction is an N-acyl-D-glucosamine 6-phosphate = an N-acyl-D-mannosamine 6-phosphate. Its pathway is amino-sugar metabolism; N-acetylneuraminate degradation; D-fructose 6-phosphate from N-acetylneuraminate: step 3/5. In terms of biological role, converts N-acetylmannosamine-6-phosphate (ManNAc-6-P) to N-acetylglucosamine-6-phosphate (GlcNAc-6-P). This chain is Putative N-acetylmannosamine-6-phosphate 2-epimerase, found in Enterobacter sp. (strain 638).